Reading from the N-terminus, the 257-residue chain is UPF0246 protein ECA3888 (257 aa).

This sequence belongs to the UPF0246 family.

This chain is UPF0246 protein ECA3888, found in Pectobacterium atrosepticum (strain SCRI 1043 / ATCC BAA-672) (Erwinia carotovora subsp. atroseptica).